The chain runs to 262 residues: Aminoglycoside 3'-phosphotransferase (262 aa).

Asp187 serves as the catalytic Proton acceptor.

This sequence belongs to the aminoglycoside phosphotransferase family. Monomer.

It is found in the cytoplasm. The catalysed reaction is kanamycin A + ATP = kanamycin 3'-phosphate + ADP + H(+). In terms of biological role, resistance to butirosin and structurally-related aminoglycosides, including kanamycin and amikacin. The polypeptide is Aminoglycoside 3'-phosphotransferase (Niallia circulans (Bacillus circulans)).